A 236-amino-acid chain; its full sequence is Eukaryotic translation initiation factor 3 subunit K (236 aa).

The PCI domain maps to 42 to 222 (YDKDILVTTL…TIKSRNIEEK (181 aa)).

The protein belongs to the eIF-3 subunit K family. As to quaternary structure, component of the eukaryotic translation initiation factor 3 (eIF-3) complex.

It localises to the cytoplasm. In terms of biological role, component of the eukaryotic translation initiation factor 3 (eIF-3) complex, which is involved in protein synthesis of a specialized repertoire of mRNAs and, together with other initiation factors, stimulates binding of mRNA and methionyl-tRNAi to the 40S ribosome. The eIF-3 complex specifically targets and initiates translation of a subset of mRNAs involved in cell proliferation. The protein is Eukaryotic translation initiation factor 3 subunit K of Brugia malayi (Filarial nematode worm).